Here is a 315-residue protein sequence, read N- to C-terminus: Protein sprouty homolog 2 (315 aa).

Polar residues predominate over residues Met-1–Leu-15. Disordered stretches follow at residues Met-1–His-39 and Asn-51–Phe-140. Over residues Asp-20 to Asp-32 the composition is skewed to basic and acidic residues. Positions Ser-108–Phe-140 are enriched in low complexity. Positions Ser-118–Thr-315 are required for interaction with CAV1. The SPR domain maps to Arg-177–Cys-291. The interval Cys-178–Thr-315 is required for interaction with TESK1.

The protein belongs to the sprouty family. As to quaternary structure, forms heterodimers with SPRY1. Forms a tripartite complex containing GAB1, METTL13 and SPRY2. Within the complex interacts with METTL13. Interacts with RAF1. Interacts (via C-terminus) with TESK1 (via C-terminus); the interaction disrupts SPRY2 interaction with GRB2, potentially via disruption of SPRY2 serine dephosphorylation. Interacts with PPP2R1A/PP2A-A and PPP2CA/PP2A-C; the interaction with PPP2CA/PP2A-C is inhibited by interaction with TESK1, possibly by vesicular sequestration of SPRY2. Inhibition of the interaction with the serine/threonine-protein phosphatase 2A (PP2A) holoenzyme results in loss of PP2A-mediated dephosphorylation, resulting in the loss of SPRY2 interaction with GRB2. Interacts with GRB2. Interacts with CBL/C-CBL; the interaction inhibits CBL-mediated ubiquitination of EGFR. Interacts (via C-terminus) with CAV1 (via C-terminus). Cleaved at Pro-144 by the prolyl endopeptidase FAP (seprase) activity (in vitro).

It is found in the cytoplasm. The protein resides in the cytoskeleton. Its subcellular location is the cell projection. It localises to the ruffle membrane. Antagonist of fibroblast growth factor (FGF) pathways via inhibition of FGF-mediated phosphorylation of ERK1/2. Thereby acts as an antagonist of FGF-induced retinal lens fiber differentiation, may inhibit limb bud outgrowth and may negatively modulate respiratory organogenesis. Inhibits TGFB-induced epithelial-to-mesenchymal transition in retinal lens epithelial cells. Inhibits CBL/C-CBL-mediated EGFR ubiquitination. The polypeptide is Protein sprouty homolog 2 (SPRY2) (Macaca fascicularis (Crab-eating macaque)).